A 157-amino-acid chain; its full sequence is MEKVPMTAEGYKALDEELKRLKTVERPAVIAAIAEARSHGDLSENAEYHAAKERQGWIEGQIAEIEDKMARAQVIDVSKLSGEQVKFGATVSLIDEDTEEEARYQIVGEHEADVKAGRVSVTSPIARAIIGKETGDVVEVNTPGGVKAYEITKVEWV.

This sequence belongs to the GreA/GreB family.

In terms of biological role, necessary for efficient RNA polymerase transcription elongation past template-encoded arresting sites. The arresting sites in DNA have the property of trapping a certain fraction of elongating RNA polymerases that pass through, resulting in locked ternary complexes. Cleavage of the nascent transcript by cleavage factors such as GreA or GreB allows the resumption of elongation from the new 3'terminus. GreA releases sequences of 2 to 3 nucleotides. The chain is Transcription elongation factor GreA from Phenylobacterium zucineum (strain HLK1).